An 88-amino-acid chain; its full sequence is ATP synthase F(0) complex subunit f, mitochondrial (88 aa).

An N-acetylalanine modification is found at Ala-2. At Ser-3 the chain carries Phosphoserine. Lys-16 carries the post-translational modification N6-acetyllysine. The chain crosses the membrane as a helical span at residues Met-62–Leu-79.

Belongs to the ATPase F chain family. Component of the ATP synthase complex composed at least of ATP5F1A/subunit alpha, ATP5F1B/subunit beta, ATP5MC1/subunit c (homooctomer), MT-ATP6/subunit a, MT-ATP8/subunit 8, ATP5ME/subunit e, ATP5MF/subunit f, ATP5MG/subunit g, ATP5MK/subunit k, ATP5MJ/subunit j, ATP5F1C/subunit gamma, ATP5F1D/subunit delta, ATP5F1E/subunit epsilon, ATP5PF/subunit F6, ATP5PB/subunit b, ATP5PD/subunit d, ATP5PO/subunit OSCP. ATP synthase complex consists of a soluble F(1) head domain (subunits alpha(3) and beta(3)) - the catalytic core - and a membrane F(0) domain - the membrane proton channel (subunits c, a, 8, e, f, g, k and j). These two domains are linked by a central stalk (subunits gamma, delta, and epsilon) rotating inside the F1 region and a stationary peripheral stalk (subunits F6, b, d, and OSCP).

The protein localises to the mitochondrion. It is found in the mitochondrion inner membrane. In terms of biological role, subunit f, of the mitochondrial membrane ATP synthase complex (F(1)F(0) ATP synthase or Complex V) that produces ATP from ADP in the presence of a proton gradient across the membrane which is generated by electron transport complexes of the respiratory chain. ATP synthase complex consist of a soluble F(1) head domain - the catalytic core - and a membrane F(1) domain - the membrane proton channel. These two domains are linked by a central stalk rotating inside the F(1) region and a stationary peripheral stalk. During catalysis, ATP synthesis in the catalytic domain of F(1) is coupled via a rotary mechanism of the central stalk subunits to proton translocation. In vivo, can only synthesize ATP although its ATP hydrolase activity can be activated artificially in vitro. Part of the complex F(0) domain. The sequence is that of ATP synthase F(0) complex subunit f, mitochondrial from Mus musculus (Mouse).